The following is a 302-amino-acid chain: Glutaminase (302 aa).

Residues Ser61, Asn111, Glu155, Asn162, Tyr186, Tyr238, and Val256 each coordinate substrate.

Belongs to the glutaminase family. In terms of assembly, homotetramer.

It carries out the reaction L-glutamine + H2O = L-glutamate + NH4(+). This chain is Glutaminase, found in Stutzerimonas stutzeri (strain A1501) (Pseudomonas stutzeri).